A 70-amino-acid polypeptide reads, in one-letter code: MSRKMTGIVKTFDGKSGKGLITPSDGRIDVQLHVSALNLRDAEEITTGLRVEFCRINGLRGPSAANVYLS.

Residues 7–67 enclose the CSD domain; sequence GIVKTFDGKS…GLRGPSAANV (61 aa).

Its subcellular location is the cytoplasm. This is Cold shock-like protein CspF (cspF) from Escherichia coli (strain K12).